Here is a 462-residue protein sequence, read N- to C-terminus: Probable Xaa-Pro aminopeptidase NECHADRAFT_60613 (462 aa).

Mn(2+)-binding residues include Asp259, Asp270, Glu393, and Glu433.

Belongs to the peptidase M24B family. The cofactor is Mn(2+).

The catalysed reaction is Release of any N-terminal amino acid, including proline, that is linked to proline, even from a dipeptide or tripeptide.. Catalyzes the removal of a penultimate prolyl residue from the N-termini of peptides. The polypeptide is Probable Xaa-Pro aminopeptidase NECHADRAFT_60613 (Fusarium vanettenii (strain ATCC MYA-4622 / CBS 123669 / FGSC 9596 / NRRL 45880 / 77-13-4) (Fusarium solani subsp. pisi)).